A 603-amino-acid polypeptide reads, in one-letter code: Cholinesterase (603 aa).

The N-terminal stretch at 1–29 is a signal peptide; the sequence is MQTQHTKVTQTHFLLWILLLCMPFGKSHT. A glycan (N-linked (GlcNAc...) asparagine) is linked at N86. A disulfide bridge links C94 with C121. N-linked (GlcNAc...) asparagine glycosylation is present at N135. 145–146 provides a ligand contact to substrate; the sequence is GG. S227 (acyl-ester intermediate) is an active-site residue. S227 is subject to Phosphoserine. An N-linked (GlcNAc...) asparagine glycan is attached at N270. A disulfide bond links C281 and C292. Catalysis depends on E354, which acts as the Charge relay system. An N-linked (GlcNAc...) asparagine glycan is attached at N370. Cysteines 429 and 548 form a disulfide. H467 serves as the catalytic Charge relay system. N-linked (GlcNAc...) asparagine glycosylation is found at N484, N510, and N515.

The protein belongs to the type-B carboxylesterase/lipase family. As to quaternary structure, homotetramer; disulfide-linked. Dimer of dimers. Present in most cells except erythrocytes.

It localises to the secreted. It carries out the reaction an acylcholine + H2O = a carboxylate + choline + H(+). Its function is as follows. Esterase with broad substrate specificity. Contributes to the inactivation of the neurotransmitter acetylcholine. Can degrade neurotoxic organophosphate esters. The chain is Cholinesterase (Bche) from Mus musculus (Mouse).